The primary structure comprises 243 residues: Uroporphyrinogen-III C-methyltransferase (243 aa).

Residues P12, 88 to 90 (SGD), 118 to 119 (ST), M166, and A195 contribute to the S-adenosyl-L-homocysteine site.

It belongs to the precorrin methyltransferase family.

The catalysed reaction is uroporphyrinogen III + 2 S-adenosyl-L-methionine = precorrin-2 + 2 S-adenosyl-L-homocysteine + H(+). The protein operates within cofactor biosynthesis; adenosylcobalamin biosynthesis; precorrin-2 from uroporphyrinogen III: step 1/1. It functions in the pathway porphyrin-containing compound metabolism; siroheme biosynthesis; precorrin-2 from uroporphyrinogen III: step 1/1. Functionally, catalyzes the two successive C-2 and C-7 methylation reactions involved in the conversion of uroporphyrinogen III to precorrin-2 via the intermediate formation of precorrin-1. It is a step in the biosynthesis of both cobalamin (vitamin B12) and siroheme. In Synechococcus elongatus (strain ATCC 33912 / PCC 7942 / FACHB-805) (Anacystis nidulans R2), this protein is Uroporphyrinogen-III C-methyltransferase.